Reading from the N-terminus, the 207-residue chain is Large ribosomal subunit protein uL4 (207 aa).

Residues 48-70 form a disordered region; it reads KAQKTRSEVSGGGAKPWRQKGTG.

The protein belongs to the universal ribosomal protein uL4 family. As to quaternary structure, part of the 50S ribosomal subunit.

Its function is as follows. One of the primary rRNA binding proteins, this protein initially binds near the 5'-end of the 23S rRNA. It is important during the early stages of 50S assembly. It makes multiple contacts with different domains of the 23S rRNA in the assembled 50S subunit and ribosome. Forms part of the polypeptide exit tunnel. The chain is Large ribosomal subunit protein uL4 from Francisella tularensis subsp. holarctica (strain FTNF002-00 / FTA).